The chain runs to 128 residues: Sulfurtransferase TusD (128 aa).

The Cysteine persulfide intermediate role is filled by C78.

It belongs to the DsrE/TusD family. Heterohexamer, formed by a dimer of trimers. The hexameric TusBCD complex contains 2 copies each of TusB, TusC and TusD. The TusBCD complex interacts with TusE.

The protein localises to the cytoplasm. Its function is as follows. Part of a sulfur-relay system required for 2-thiolation of 5-methylaminomethyl-2-thiouridine (mnm(5)s(2)U) at tRNA wobble positions. Accepts sulfur from TusA and transfers it in turn to TusE. The chain is Sulfurtransferase TusD from Escherichia coli O7:K1 (strain IAI39 / ExPEC).